Here is a 321-residue protein sequence, read N- to C-terminus: Malate dehydrogenase (321 aa).

NAD(+)-binding positions include 10-15 (GGGQIG) and Asp34. 2 residues coordinate substrate: Arg83 and Arg89. NAD(+) contacts are provided by residues Asn96 and 119–121 (ISN). Substrate contacts are provided by Asn121 and Arg152. His176 functions as the Proton acceptor in the catalytic mechanism.

The protein belongs to the LDH/MDH superfamily. MDH type 3 family.

The catalysed reaction is (S)-malate + NAD(+) = oxaloacetate + NADH + H(+). Its function is as follows. Catalyzes the reversible oxidation of malate to oxaloacetate. In Trichlorobacter lovleyi (strain ATCC BAA-1151 / DSM 17278 / SZ) (Geobacter lovleyi), this protein is Malate dehydrogenase.